The sequence spans 378 residues: Fructose-1,6-bisphosphatase class 1 2 (378 aa).

Glu-98, Asp-120, Leu-122, and Asp-123 together coordinate Mg(2+). Substrate-binding positions include 123 to 126 and Asn-227; that span reads DGSS. Glu-299 contributes to the Mg(2+) binding site.

It belongs to the FBPase class 1 family. As to quaternary structure, homotetramer. Mg(2+) is required as a cofactor.

The protein localises to the cytoplasm. It catalyses the reaction beta-D-fructose 1,6-bisphosphate + H2O = beta-D-fructose 6-phosphate + phosphate. It functions in the pathway carbohydrate biosynthesis; gluconeogenesis. This chain is Fructose-1,6-bisphosphatase class 1 2, found in Paraburkholderia xenovorans (strain LB400).